We begin with the raw amino-acid sequence, 514 residues long: Adenylosuccinate synthetase 2, chloroplastic (514 aa).

Residues 1–56 (MAMAAAAAVASQGLLATSSQQQKKSSAKLICNAATFFSGKRLLWVKSCNNGAVGLR) constitute a chloroplast transit peptide. Residues 100–106 (GDEGKGK) and 128–130 (GHT) contribute to the GTP site. Residue Asp-101 is the Proton acceptor of the active site. Residues Asp-101 and Gly-128 each contribute to the Mg(2+) site. IMP contacts are provided by residues 101-104 (DEGK), 126-129 (NAGH), Thr-218, Arg-232, Gln-312, Thr-327, and Arg-391. The active-site Proton donor is His-129. 387–393 (TTTGRPR) contributes to the substrate binding site. Residues Arg-393, 419–421 (KLD), and 502–504 (GVG) each bind GTP.

This sequence belongs to the adenylosuccinate synthetase family. Homodimer. The cofactor is Mg(2+).

It localises to the plastid. It is found in the chloroplast. The catalysed reaction is IMP + L-aspartate + GTP = N(6)-(1,2-dicarboxyethyl)-AMP + GDP + phosphate + 2 H(+). It participates in purine metabolism; AMP biosynthesis via de novo pathway; AMP from IMP: step 1/2. Its function is as follows. Plays an important role in the de novo pathway and in the salvage pathway of purine nucleotide biosynthesis. Catalyzes the first committed step in the biosynthesis of AMP from IMP. This Physcomitrium patens (Spreading-leaved earth moss) protein is Adenylosuccinate synthetase 2, chloroplastic.